Reading from the N-terminus, the 1225-residue chain is MFSYSQAIRFIIFLLPICLTFKITENRIDRGKLNFEIQDITIKSGAFWSIVDNSICTFFGSLMVEPQASLYVSSTSPILALQVAFVSILGVFHNQGNITFDSSASLTSATYRIITSTFRNTGRMFFSASGKFPNTMDIVASDWTNNGLLSFHQDQRTSGVVSLGSALGTITNNGQIKLSNQVYQQRTQISGSGCFVAINNSTIYISNSLLPVQITQSFYLADSTSSIIVDSFSATQTFNVYGFGNGNMIGLTLPLVGNYWYSSYTYDATTGILIMRNVFLEQKFNIGLGYNPSLFKIVTDWGAGIPSTILGSLSYSGCVPSRRLPSICQIDPISSLEIPGTKPTQFTSVFVSTDDSGRNGQYVGLFEVATNKNYEWVSAVIIITSIPTVTIELPPTLTLEAQWLPTVSGVLHTSSTITQSTKIGLLTTVSLVPVAETQLASRTFSIVGPPIPDTTSLELVVPTKSETRVVTESTVVPVLPPKVTHFTNSSTSNRRYSSESMVDEEFPSEPFMSDEVSIEVYESYTDESCVISTDFSVDVDYSSDLSMNFQTYDTLDTTEMFNTVENFETYDTFGTIESFDIFETSQTFESYETFNETSDLSMFSLTSESFSDLPPPLVQTDTPVSFNPVPSRTNMSEKTIMWEVTNSQGSIITESGIILISGEYQTTVTTFLRDLDQMEGYTKYTKTWEVTNSNGSVVTESGIIDESGSYHTTVTTFPQKDQNWEWAANTVEYTKTWIVTNEDGSIITESGIVGESGLYQTTVTTFPHELSSFTIYQSEEAHSPGVINAGDIESTPLATSSSIYQSVIIEDEFPSSPGNTYTDVFSPTTGHDLDLPDDTTFTPSQSSSTTVPIESEYISESIILDAGSSVSTMISPTTLTTNFPIFDSSDNQFKHVSLWDSRVSSRSIVIVSSEFPESDAPLILASPNDGSSNQTSTTASITVNDNQNINNPEFQQGEAVISSSIDSSVSHLYYISEETSIASNNGDLSDDLEVDFILLTSLHDTISAKATSAGYSWKFYPESDEIQIDQTGDYNYSLAGAKTHIHESAYTQQDASTQKGASVQQETSIQQRVSTKQETYTQEGTQQVTRTQEKVQQGASHSTTNSHFEGTFISKTASPTNNDFTLSFEPKDNATDISNSFFAHLSIVGNSTVFETDYTDFSFIANSNTFKSDANGVDSTSNQTYSAGVGGSNVSGLISKSESVVLLIRPVMIFVFLAICVVIML.

Positions Met1–Thr20 are cleaved as a signal peptide. Asn97, Asn200, Asn488, Asn595, Asn634, and Asn694 each carry an N-linked (GlcNAc...) asparagine glycan. The tract at residues Asp832–Pro852 is disordered. Over residues Asp838–Pro852 the composition is skewed to low complexity. Asn933 and Asn1035 each carry an N-linked (GlcNAc...) asparagine glycan. Residues Ala1049–Ser1114 are disordered. N-linked (GlcNAc...) asparagine glycans are attached at residues Asn1133, Asn1150, Asn1182, and Asn1193. Ser1195 is lipidated: GPI-anchor amidated serine. A propeptide spans Gly1196 to Leu1225 (removed in mature form).

It belongs to the HYR1/IFF family. In terms of processing, the GPI-anchor is attached to the protein in the endoplasmic reticulum and serves to target the protein to the cell surface. There, the glucosamine-inositol phospholipid moiety is cleaved off and the GPI-modified mannoprotein is covalently attached via its lipidless GPI glycan remnant to the 1,6-beta-glucan of the outer cell wall layer.

The protein resides in the secreted. It is found in the cell wall. Its subcellular location is the membrane. GPI-anchored cell wall protein involved in cell wall organization, hyphal growth, as well as in host-fungal interaction and virulence. The sequence is that of Hyphally regulated cell wall protein 4 (HYR4) from Candida albicans (strain SC5314 / ATCC MYA-2876) (Yeast).